We begin with the raw amino-acid sequence, 101 residues long: Small ribosomal subunit protein uS14 (101 aa).

Belongs to the universal ribosomal protein uS14 family. As to quaternary structure, part of the 30S ribosomal subunit. Contacts proteins S3 and S10.

In terms of biological role, binds 16S rRNA, required for the assembly of 30S particles and may also be responsible for determining the conformation of the 16S rRNA at the A site. The polypeptide is Small ribosomal subunit protein uS14 (Kocuria rhizophila (strain ATCC 9341 / DSM 348 / NBRC 103217 / DC2201)).